We begin with the raw amino-acid sequence, 441 residues long: Xylose isomerase (441 aa).

Active-site residues include histidine 105 and aspartate 108. Glutamate 236, glutamate 272, histidine 275, aspartate 300, aspartate 311, aspartate 313, and aspartate 343 together coordinate Mg(2+).

It belongs to the xylose isomerase family. As to quaternary structure, homotetramer. Mg(2+) serves as cofactor.

It localises to the cytoplasm. The enzyme catalyses alpha-D-xylose = alpha-D-xylulofuranose. The protein is Xylose isomerase of Mesorhizobium japonicum (strain LMG 29417 / CECT 9101 / MAFF 303099) (Mesorhizobium loti (strain MAFF 303099)).